We begin with the raw amino-acid sequence, 478 residues long: Aspartyl/glutamyl-tRNA(Asn/Gln) amidotransferase subunit B (478 aa).

Belongs to the GatB/GatE family. GatB subfamily. In terms of assembly, heterotrimer of A, B and C subunits.

It carries out the reaction L-glutamyl-tRNA(Gln) + L-glutamine + ATP + H2O = L-glutaminyl-tRNA(Gln) + L-glutamate + ADP + phosphate + H(+). It catalyses the reaction L-aspartyl-tRNA(Asn) + L-glutamine + ATP + H2O = L-asparaginyl-tRNA(Asn) + L-glutamate + ADP + phosphate + 2 H(+). In terms of biological role, allows the formation of correctly charged Asn-tRNA(Asn) or Gln-tRNA(Gln) through the transamidation of misacylated Asp-tRNA(Asn) or Glu-tRNA(Gln) in organisms which lack either or both of asparaginyl-tRNA or glutaminyl-tRNA synthetases. The reaction takes place in the presence of glutamine and ATP through an activated phospho-Asp-tRNA(Asn) or phospho-Glu-tRNA(Gln). In Alkalilimnicola ehrlichii (strain ATCC BAA-1101 / DSM 17681 / MLHE-1), this protein is Aspartyl/glutamyl-tRNA(Asn/Gln) amidotransferase subunit B.